Reading from the N-terminus, the 342-residue chain is Pre-mRNA-splicing factor 18 (342 aa).

Met-1 is modified (N-acetylmethionine).

This sequence belongs to the PRP18 family. Heterodimer with PPIH. Interacts with PRPF4 and with the spliceosome. Part of a complex containing U4/U6 snRNPs.

The protein localises to the nucleus speckle. In terms of biological role, participates in the second step of pre-mRNA splicing. This is Pre-mRNA-splicing factor 18 (PRPF18) from Pongo abelii (Sumatran orangutan).